Consider the following 274-residue polypeptide: Dermonecrotic toxin LcsSicTox-betaIC1 (274 aa).

His5 is an active-site residue. Residues Glu25 and Asp27 each contribute to the Mg(2+) site. His41 functions as the Nucleophile in the catalytic mechanism. Intrachain disulfides connect Cys45-Cys51 and Cys47-Cys190. Residue Asn66 is glycosylated (N-linked (GlcNAc...) asparagine). Asp85 contacts Mg(2+).

This sequence belongs to the arthropod phospholipase D family. Class II subfamily. Mg(2+) serves as cofactor. As to expression, expressed by the venom gland.

It localises to the secreted. The enzyme catalyses an N-(acyl)-sphingosylphosphocholine = an N-(acyl)-sphingosyl-1,3-cyclic phosphate + choline. It carries out the reaction an N-(acyl)-sphingosylphosphoethanolamine = an N-(acyl)-sphingosyl-1,3-cyclic phosphate + ethanolamine. It catalyses the reaction a 1-acyl-sn-glycero-3-phosphocholine = a 1-acyl-sn-glycero-2,3-cyclic phosphate + choline. The catalysed reaction is a 1-acyl-sn-glycero-3-phosphoethanolamine = a 1-acyl-sn-glycero-2,3-cyclic phosphate + ethanolamine. Its function is as follows. Dermonecrotic toxins cleave the phosphodiester linkage between the phosphate and headgroup of certain phospholipids (sphingolipid and lysolipid substrates), forming an alcohol (often choline) and a cyclic phosphate. This toxin acts on sphingomyelin (SM). It may also act on ceramide phosphoethanolamine (CPE), lysophosphatidylcholine (LPC) and lysophosphatidylethanolamine (LPE), but not on lysophosphatidylserine (LPS), and lysophosphatidylglycerol (LPG). It acts by transphosphatidylation, releasing exclusively cyclic phosphate products as second products. Induces dermonecrosis, hemolysis, increased vascular permeability, edema, inflammatory response, and platelet aggregation. In Loxosceles cf. spinulosa (strain GJB-2008) (Recluse spider), this protein is Dermonecrotic toxin LcsSicTox-betaIC1.